Here is a 258-residue protein sequence, read N- to C-terminus: Pimeloyl-[acyl-carrier protein] methyl ester esterase (258 aa).

An AB hydrolase-1 domain is found at 16–242 (LVLLHGWGLN…AAHAPFISHP (227 aa)). Residues Trp22, 82-83 (SM), and 143-147 (FLALQ) each bind substrate. Ser82 serves as the catalytic Nucleophile. Active-site residues include Asp207 and His235. His235 lines the substrate pocket.

It belongs to the AB hydrolase superfamily. Carboxylesterase BioH family. In terms of assembly, monomer.

It is found in the cytoplasm. It catalyses the reaction 6-carboxyhexanoyl-[ACP] methyl ester + H2O = 6-carboxyhexanoyl-[ACP] + methanol + H(+). It functions in the pathway cofactor biosynthesis; biotin biosynthesis. Its function is as follows. The physiological role of BioH is to remove the methyl group introduced by BioC when the pimeloyl moiety is complete. It allows to synthesize pimeloyl-ACP via the fatty acid synthetic pathway through the hydrolysis of the ester bonds of pimeloyl-ACP esters. The polypeptide is Pimeloyl-[acyl-carrier protein] methyl ester esterase (Yersinia pseudotuberculosis serotype IB (strain PB1/+)).